The sequence spans 492 residues: Membrane-bound glycerophospholipid O-acyltransferase 1 (492 aa).

The next 6 membrane-spanning stretches (helical) occupy residues 33 to 53 (VNFVACQLFALSAAFWFRIYL), 69 to 89 (ILGIYFVVFCFGWYAVHLFVL), 125 to 145 (IYIFHYGILTTDFSGPLMIVT), 179 to 199 (PSLLEYLSYHLNFMSVIAGPC), 237 to 257 (MGAVIQKLCVTLMSLLLFLTL), and 296 to 316 (YFAWTLADAVHNAAGFGFNGM). Residues asparagine 349 and histidine 380 contribute to the active site. Helical transmembrane passes span 370–390 (VLTFLLSALWHGVYPGYYFTF), 423–443 (VVTWAVTQLAVSYTAAPFVML), and 452–472 (YKSVFFFLHIICLLIILFLPI). Serine 486 is modified (phosphoserine).

It belongs to the membrane-bound acyltransferase family. As to expression, highly expressed in stomach, epididymis, and colon.

It localises to the endoplasmic reticulum membrane. The enzyme catalyses a 1-acyl-sn-glycero-3-phosphoethanolamine + an acyl-CoA = a 1,2-diacyl-sn-glycero-3-phosphoethanolamine + CoA. It carries out the reaction a 1-acyl-sn-glycero-3-phospho-L-serine + an acyl-CoA = a 1,2-diacyl-sn-glycero-3-phospho-L-serine + CoA. The catalysed reaction is a 1-acyl-sn-glycero-3-phosphocholine + an acyl-CoA = a 1,2-diacyl-sn-glycero-3-phosphocholine + CoA. It catalyses the reaction a 1-O-(1Z-alkenyl)-sn-glycero-3-phosphoethanolamine + (9Z)-octadecenoyl-CoA = 1-O-(1Z)-alkenyl-2-(9Z)-octadecenoyl-sn-glycero-3-phosphoethanolamine + CoA. The enzyme catalyses 1-octadecanoyl-sn-glycero-3-phosphoethanolamine + (9Z)-octadecenoyl-CoA = 1-octadecanoyl-2-(9Z-octadecenoyl)-sn-glycero-3-phosphoethanolamine + CoA. It carries out the reaction 1-(9Z-octadecenoyl)-sn-glycero-3-phospho-L-serine + (9Z)-octadecenoyl-CoA = 1,2-di-(9Z)-octadecenoyl-sn-glycero-3-phospho-L-serine + CoA. The catalysed reaction is 1-(9Z-octadecenoyl)-sn-glycero-3-phosphoethanolamine + (9Z)-octadecenoyl-CoA = 1,2-di-(9Z-octadecenoyl)-sn-glycero-3-phosphoethanolamine + CoA. It catalyses the reaction 1-hexadecanoyl-sn-glycero-3-phosphoethanolamine + (9Z)-octadecenoyl-CoA = 1-hexadecanoyl-2-(9Z-octadecenoyl)-sn-glycero-3-phosphoethanolamine + CoA. The enzyme catalyses 1-(10Z-heptadecenoyl)-sn-glycero-3-phosphoethanolamine + hexadecanoyl-CoA = 1-(10Z-heptadecenoyl)-2-hexadecanoyl-sn-glycero-3-phosphoethanolamine + CoA. It carries out the reaction 1-(9Z-octadecenoyl)-sn-glycero-3-phospho-L-serine + octadecanoyl-CoA = 1-(9Z-octadecenoyl)-2-octadecanoyl-sn-glycero-3-phospho-L-serine + CoA. The catalysed reaction is 1-(9Z-octadecenoyl)-sn-glycero-3-phospho-L-serine + (9Z)-hexadecenoyl-CoA = 1-(9Z-octadecenoyl)-2-(9Z-hexadecenoyl)-sn-glycero-3-phospho-L-serine + CoA. It catalyses the reaction 1-(9Z-octadecenoyl)-sn-glycero-3-phospho-L-serine + (9Z,12Z)-octadecadienoyl-CoA = 1-(9Z-octadecenoyl)-2-(9Z,12Z-octadienoyl)-sn-glycero-3-phospho-L-serine + CoA. The enzyme catalyses 1-hexadecanoyl-sn-glycero-3-phosphocholine + (9Z)-octadecenoyl-CoA = 1-hexadecanoyl-2-(9Z-octadecenoyl)-sn-glycero-3-phosphocholine + CoA. It carries out the reaction 1-(10Z-heptadecenoyl)-sn-glycero-3-phosphoethanolamine + (9Z)-octadecenoyl-CoA = 1-(10Z-heptadecenoyl)-2-(9Z-octadecenoyl)-sn-glycero-3-phosphoethanolamine + CoA. Its pathway is lipid metabolism; phospholipid metabolism. Acyltransferase which catalyzes the transfer of an acyl group from an acyl-CoA towards a lysophospholipid producing a phospholipid and participates in the reacylation step of the phospholipid remodeling pathway also known as the Lands cycle. Acts on lysophosphatidylserine (1-acyl-2-hydroxy-sn-glycero-3-phospho-L-serine or LPS) and lysophosphatidylethanolamine (1-acyl-sn-glycero-3-phosphoethanolamine or LPE), and to a lesser extend lysophosphatidylcholine. Prefers oleoyl-CoA as the acyl donor and 1-oleoyl-LPE as acceptor. May play a role in neurite outgrowth during neuronal differentiation. The chain is Membrane-bound glycerophospholipid O-acyltransferase 1 from Mus musculus (Mouse).